Reading from the N-terminus, the 105-residue chain is Urease subunit beta (105 aa).

Belongs to the urease beta subunit family. In terms of assembly, heterotrimer of UreA (gamma), UreB (beta) and UreC (alpha) subunits. Three heterotrimers associate to form the active enzyme.

It is found in the cytoplasm. The catalysed reaction is urea + 2 H2O + H(+) = hydrogencarbonate + 2 NH4(+). The protein operates within nitrogen metabolism; urea degradation; CO(2) and NH(3) from urea (urease route): step 1/1. The sequence is that of Urease subunit beta from Pseudomonas putida (strain W619).